We begin with the raw amino-acid sequence, 606 residues long: Alpha-1,2-mannosyltransferase MNN23 (606 aa).

The Cytoplasmic segment spans residues 1–14 (MSINFLSIPRNRFK). Residues 15–35 (AIGVLSVTCILIYVILHSSII) form a helical membrane-spanning segment. The Extracellular portion of the chain corresponds to 36-606 (TTDFDVSDYG…QVAWLSKSQN (571 aa)). The disordered stretch occupies residues 59–86 (DNGENLKDPQPELDNDKGNGETDTTTSN). Positions 62–78 (ENLKDPQPELDNDKGNG) are enriched in basic and acidic residues.

It belongs to the MNN1/MNT family.

It is found in the golgi apparatus membrane. It functions in the pathway protein modification; protein glycosylation. Functionally, alpha-1,2-mannosyltransferase required for cell wall integrity. Responsible for addition of the first alpha-1,2-linked mannose to form the branches on the mannan backbone of oligosaccharides. Addition of alpha-1,2-mannose is required for stabilization of the alpha-1,6-mannose backbone and hence regulates mannan fibril length; and is important for both immune recognition and virulence. This Candida albicans (strain SC5314 / ATCC MYA-2876) (Yeast) protein is Alpha-1,2-mannosyltransferase MNN23 (MNN23).